We begin with the raw amino-acid sequence, 299 residues long: GTPase Era (299 aa).

One can recognise an Era-type G domain in the interval 4–171 (KSGFVAILGR…IKLLTDNLEE (168 aa)). Residues 12-19 (GRPNVGKS) form a G1 region. Residue 12 to 19 (GRPNVGKS) participates in GTP binding. The segment at 38 to 42 (QTTRN) is G2. The G3 stretch occupies residues 59 to 62 (DTPG). Residues 59 to 63 (DTPGI) and 121 to 124 (NKID) contribute to the GTP site. A G4 region spans residues 121 to 124 (NKID). The G5 stretch occupies residues 150–152 (ISA). The 79-residue stretch at 202–280 (TQQEVPHSVA…YLETWVKVKK (79 aa)) folds into the KH type-2 domain.

It belongs to the TRAFAC class TrmE-Era-EngA-EngB-Septin-like GTPase superfamily. Era GTPase family. Monomer.

The protein resides in the cytoplasm. Its subcellular location is the cell membrane. Functionally, an essential GTPase that binds both GDP and GTP, with rapid nucleotide exchange. Plays a role in 16S rRNA processing and 30S ribosomal subunit biogenesis and possibly also in cell cycle regulation and energy metabolism. This Streptococcus agalactiae serotype III (strain NEM316) protein is GTPase Era.